The primary structure comprises 131 residues: Small ribosomal subunit protein uS8 (131 aa).

Belongs to the universal ribosomal protein uS8 family. Part of the 30S ribosomal subunit. Contacts proteins S5 and S12.

Functionally, one of the primary rRNA binding proteins, it binds directly to 16S rRNA central domain where it helps coordinate assembly of the platform of the 30S subunit. This Delftia acidovorans (strain DSM 14801 / SPH-1) protein is Small ribosomal subunit protein uS8.